Reading from the N-terminus, the 70-residue chain is Large ribosomal subunit protein bL31 (70 aa).

Zn(2+) contacts are provided by C16, C18, C37, and C40.

This sequence belongs to the bacterial ribosomal protein bL31 family. Type A subfamily. In terms of assembly, part of the 50S ribosomal subunit. Requires Zn(2+) as cofactor.

In terms of biological role, binds the 23S rRNA. This chain is Large ribosomal subunit protein bL31, found in Erwinia tasmaniensis (strain DSM 17950 / CFBP 7177 / CIP 109463 / NCPPB 4357 / Et1/99).